Consider the following 126-residue polypeptide: Holo-[acyl-carrier-protein] synthase (126 aa).

Positions 9 and 58 each coordinate Mg(2+).

Belongs to the P-Pant transferase superfamily. AcpS family. Mg(2+) is required as a cofactor.

It localises to the cytoplasm. It catalyses the reaction apo-[ACP] + CoA = holo-[ACP] + adenosine 3',5'-bisphosphate + H(+). Functionally, transfers the 4'-phosphopantetheine moiety from coenzyme A to a Ser of acyl-carrier-protein. This Salmonella choleraesuis (strain SC-B67) protein is Holo-[acyl-carrier-protein] synthase.